The sequence spans 255 residues: Diphthine synthase (255 aa).

S-adenosyl-L-methionine contacts are provided by residues L9, D85, V88, 113 to 114 (SI), L164, A207, and H232.

It belongs to the diphthine synthase family. In terms of assembly, homodimer.

The enzyme catalyses 2-[(3S)-amino-3-carboxypropyl]-L-histidyl-[translation elongation factor 2] + 3 S-adenosyl-L-methionine = diphthine-[translation elongation factor 2] + 3 S-adenosyl-L-homocysteine + 3 H(+). It participates in protein modification; peptidyl-diphthamide biosynthesis. Functionally, S-adenosyl-L-methionine-dependent methyltransferase that catalyzes the trimethylation of the amino group of the modified target histidine residue in translation elongation factor 2 (EF-2), to form an intermediate called diphthine. The three successive methylation reactions represent the second step of diphthamide biosynthesis. The chain is Diphthine synthase from Methanococcus maripaludis (strain C5 / ATCC BAA-1333).